The primary structure comprises 100 residues: Protein E7 (100 aa).

Positions 1 to 43 (MIGKQATLRDIVLEELVQPIDLHCHEELPDLPEDIEASVVEEE) are E7 terminal domain. An LXCXE motif; interaction with host RB1 and TMEM173/STING motif is present at residues 22–26 (LHCHE). The segment at 55–91 (CGGCEVRLKLYVWATDAGIRNLQDCLLGDVRLLCPTC) is a zinc-finger region. The Nuclear export signal signature appears at 73–81 (IRNLQDCLL).

It belongs to the papillomaviridae E7 protein family. Homodimer. Homooligomer. Interacts with host RB1; this interaction induces dissociation of RB1-E2F1 complex thereby disrupting RB1 activity. Interacts with host EP300; this interaction represses EP300 transcriptional activity. Interacts with protein E2; this interaction inhibits E7 oncogenic activity. Interacts with host TMEM173/STING; this interaction impairs the ability of TMEM173/STING to sense cytosolic DNA and promote the production of type I interferon (IFN-alpha and IFN-beta). Highly phosphorylated.

It is found in the host cytoplasm. Its subcellular location is the host nucleus. Functionally, plays a role in viral genome replication by driving entry of quiescent cells into the cell cycle. Stimulation of progression from G1 to S phase allows the virus to efficiently use the cellular DNA replicating machinery to achieve viral genome replication. E7 protein has both transforming and trans-activating activities. Induces the disassembly of the E2F1 transcription factor from RB1, with subsequent transcriptional activation of E2F1-regulated S-phase genes. Interferes with host histone deacetylation mediated by HDAC1 and HDAC2, leading to transcription activation. Also plays a role in the inhibition of both antiviral and antiproliferative functions of host interferon alpha. Interaction with host TMEM173/STING impairs the ability of TMEM173/STING to sense cytosolic DNA and promote the production of type I interferon (IFN-alpha and IFN-beta). The sequence is that of Protein E7 from Homo sapiens (Human).